A 140-amino-acid chain; its full sequence is Transcription antitermination protein NusB (140 aa).

It belongs to the NusB family.

In terms of biological role, involved in transcription antitermination. Required for transcription of ribosomal RNA (rRNA) genes. Binds specifically to the boxA antiterminator sequence of the ribosomal RNA (rrn) operons. The chain is Transcription antitermination protein NusB from Streptococcus pneumoniae (strain JJA).